A 211-amino-acid chain; its full sequence is Pyridoxine/pyridoxamine 5'-phosphate oxidase (211 aa).

Substrate contacts are provided by residues arginine 7–tyrosine 10 and lysine 65. Residues arginine 60–lysine 65, phenylalanine 75–threonine 76, lysine 82, and glutamine 104 each bind FMN. Substrate is bound by residues tyrosine 122, arginine 126, and serine 130. Residues glutamine 139–serine 140 and tryptophan 184 contribute to the FMN site. Arginine 190–histidine 192 serves as a coordination point for substrate. Arginine 194 provides a ligand contact to FMN.

This sequence belongs to the pyridoxamine 5'-phosphate oxidase family. In terms of assembly, homodimer. FMN is required as a cofactor.

It carries out the reaction pyridoxamine 5'-phosphate + O2 + H2O = pyridoxal 5'-phosphate + H2O2 + NH4(+). It catalyses the reaction pyridoxine 5'-phosphate + O2 = pyridoxal 5'-phosphate + H2O2. Its pathway is cofactor metabolism; pyridoxal 5'-phosphate salvage; pyridoxal 5'-phosphate from pyridoxamine 5'-phosphate: step 1/1. The protein operates within cofactor metabolism; pyridoxal 5'-phosphate salvage; pyridoxal 5'-phosphate from pyridoxine 5'-phosphate: step 1/1. Its function is as follows. Catalyzes the oxidation of either pyridoxine 5'-phosphate (PNP) or pyridoxamine 5'-phosphate (PMP) into pyridoxal 5'-phosphate (PLP). The polypeptide is Pyridoxine/pyridoxamine 5'-phosphate oxidase (Teredinibacter turnerae (strain ATCC 39867 / T7901)).